A 387-amino-acid polypeptide reads, in one-letter code: Phosphoglycerate kinase (387 aa).

Substrate contacts are provided by residues 21 to 23, Arg-36, and 59 to 62; these read DLN and HLGR. Lys-84 is modified (N6-acetyllysine). Arg-113 and Arg-146 together coordinate substrate. Residues Lys-197, Glu-314, and 340-343 each bind ATP; that span reads GGDT.

This sequence belongs to the phosphoglycerate kinase family. As to quaternary structure, monomer.

It localises to the cytoplasm. It carries out the reaction (2R)-3-phosphoglycerate + ATP = (2R)-3-phospho-glyceroyl phosphate + ADP. Its pathway is carbohydrate degradation; glycolysis; pyruvate from D-glyceraldehyde 3-phosphate: step 2/5. This chain is Phosphoglycerate kinase, found in Escherichia coli O139:H28 (strain E24377A / ETEC).